A 141-amino-acid chain; its full sequence is Galactose-6-phosphate isomerase subunit LacA 1 (141 aa).

It belongs to the LacAB/RpiB family. In terms of assembly, heteromultimeric protein consisting of LacA and LacB.

It catalyses the reaction aldehydo-D-galactose 6-phosphate = keto-D-tagatose 6-phosphate. Its pathway is carbohydrate metabolism; D-galactose 6-phosphate degradation; D-tagatose 6-phosphate from D-galactose 6-phosphate: step 1/1. This is Galactose-6-phosphate isomerase subunit LacA 1 from Streptococcus pyogenes serotype M18 (strain MGAS8232).